The sequence spans 44 residues: MDNPAFFFTIFLWFFLLSITAYSIYVGFGPPSKRLRDPFEEHED.

Residues 6-26 (FFFTIFLWFFLLSITAYSIYV) form a helical membrane-spanning segment.

This sequence belongs to the PsbN family.

It is found in the plastid. The protein resides in the chloroplast thylakoid membrane. Functionally, may play a role in photosystem I and II biogenesis. The polypeptide is Protein PsbN (Stigeoclonium helveticum (Green alga)).